Here is a 224-residue protein sequence, read N- to C-terminus: Putative carbamate hydrolase RutD (224 aa).

The AB hydrolase-1 domain occupies 14 to 115 (PVVVLISGLG…TVLVSVNGWL (102 aa)).

Belongs to the AB hydrolase superfamily. Hydrolase RutD family.

The catalysed reaction is carbamate + 2 H(+) = NH4(+) + CO2. Functionally, involved in pyrimidine catabolism. May facilitate the hydrolysis of carbamate, a reaction that can also occur spontaneously. The polypeptide is Putative carbamate hydrolase RutD (Shigella dysenteriae serotype 1 (strain Sd197)).